The sequence spans 261 residues: Chitinase 8 (261 aa).

The signal sequence occupies residues 1-29; sequence MTTTTTRFVQLAACAAASLLAVAASGAAA. Cystine bridges form between cysteine 53–cysteine 115 and cysteine 221–cysteine 253. Catalysis depends on glutamate 98, which acts as the Proton donor.

The protein belongs to the glycosyl hydrolase 19 family. Chitinase class II subfamily. In terms of tissue distribution, expressed in roots, leaves, sheaths and meristems.

The enzyme catalyses Random endo-hydrolysis of N-acetyl-beta-D-glucosaminide (1-&gt;4)-beta-linkages in chitin and chitodextrins.. The chain is Chitinase 8 (Cht8) from Oryza sativa subsp. japonica (Rice).